The sequence spans 325 residues: Diadenosine 5',5'''-P1,P4-tetraphosphate phosphorylase 2 (325 aa).

Substrate-binding positions include Lys53, 92-93 (NK), Asn148, and 154-157 (GSSQ). The Nucleophile role is filled by His161. Substrate-binding positions include Gln163, 277 to 279 (NST), Met284, and Lys288.

Belongs to the ATP adenylyltransferase family. Monomer. Requires a divalent metal cation as cofactor.

The protein resides in the cytoplasm. It is found in the nucleus. The enzyme catalyses ADP + ATP + H(+) = P(1),P(4)-bis(5'-adenosyl) tetraphosphate + phosphate. The catalysed reaction is sulfate + ADP + H(+) = adenosine 5'-phosphosulfate + phosphate. In terms of biological role, ap4A phosphorylase catalyzes the phosphorolytic degradation of bis(5'-adenosyl) tetraphosphate (Ap4A) into ADP and ATP. Can also use other Np4N' nucleotides (where N and N' stand for A,C,G or U) as substrates, but prefers A-containing substrates. Cannot catalyze the reverse reaction. Additionally, this enzyme can also catalyze the phosphorolytic degradation of adenosine 5'-phosphosulfate (AMPS) into ADP and sulfate, the reversible exchange reaction between inorganic phosphate and the beta-phosphate of a nucleoside diphosphate (NDP), and the synthesis of Ap4A from AMPS plus ATP. The polypeptide is Diadenosine 5',5'''-P1,P4-tetraphosphate phosphorylase 2 (Saccharomyces cerevisiae (strain ATCC 204508 / S288c) (Baker's yeast)).